The chain runs to 428 residues: ASTRA-associated protein 1 (428 aa).

WD repeat units follow at residues 15 to 52, 55 to 93, 122 to 163, 171 to 209, 217 to 259, 323 to 362, and 364 to 418; these read GHTHPVTSLRFYNAFLVSGDESGWVFWWSLVTRRPLAI, AHHEAILSLVWMDETHLLTQGRDDKLYVWRLELDAQGKS, VNSL…VVWN, GIKTGIVMDLNIMNKKLIVGYEGGAVAVFDISDRNRYTP, SHVQ…EEME, VRHSGLSSLQLDSDGDLIMTAGWDGKVRLFTYDDISKVSV, and HERE…EKTL. A disordered region spans residues 250–295; that stretch reads DQVVPEEEMEEPEPAKNSERPPSPKIVEVEDSPELEPPKNVVRGFD.

It belongs to the WD repeat ASA1 family. As to quaternary structure, component of the ASTRA chromatin remodeling machinery complex.

It localises to the nucleus. In terms of biological role, component of the ASTRA complex involved in chromatin remodeling. The polypeptide is ASTRA-associated protein 1 (ASA1) (Yarrowia lipolytica (strain CLIB 122 / E 150) (Yeast)).